A 647-amino-acid polypeptide reads, in one-letter code: Carotenoid phi-ring synthase (647 aa).

Residues Ala67, 86 to 87 (EA), Lys94, and Tyr120 contribute to the FAD site. The Rieske domain maps to 322-416 (VASIPKREVP…VREAGEMLVI (95 aa)). Residues Cys362, His364, Cys380, and His383 each contribute to the [2Fe-2S] cluster site. Residues Asp601 and Met612 each coordinate FAD.

This sequence belongs to the carotenoid/retinoid oxidoreductase family. FAD is required as a cofactor. The cofactor is [2Fe-2S] cluster.

It catalyses the reaction a carotenoid beta-end derivative + 2 A = a carotenoid phi-end derivative + 2 AH2. It participates in carotenoid biosynthesis. In terms of biological role, involved in the biosynthesis of chlorobactene, a carotenoid with aromatic end group. Catalyzes the introduction of two additional double bonds into the ionone ring of gamma-carotene to produce chlorobactene. The reaction includes an intramolecular methyl transfer from position C1 to position C2 of the ring. The sequence is that of Carotenoid phi-ring synthase from Chlorobaculum tepidum (strain ATCC 49652 / DSM 12025 / NBRC 103806 / TLS) (Chlorobium tepidum).